Reading from the N-terminus, the 662-residue chain is Bifunctional polymyxin resistance protein ArnA (662 aa).

Residues 1 to 307 are formyltransferase ArnAFT; it reads MTSKAVVFAY…ELGLVEGARL (307 aa). Histidine 106 functions as the Proton donor; for formyltransferase activity in the catalytic mechanism. (6R)-10-formyltetrahydrofolate contacts are provided by residues arginine 116 and 138–142; that span reads IERAD. The tract at residues 316–662 is dehydrogenase ArnADH; it reads RRTRVLILGV…EALREREAQA (347 aa). NAD(+) is bound by residues aspartate 349 and 370–371; that span reads DI. Residues alanine 395, tyrosine 400, and 434-435 contribute to the UDP-alpha-D-glucuronate site; that span reads TS. Catalysis depends on glutamate 436, which acts as the Proton acceptor; for decarboxylase activity. Residues arginine 462, asparagine 493, 527 to 536, and tyrosine 614 contribute to the UDP-alpha-D-glucuronate site; that span reads RLVDGGAQKR. Arginine 620 serves as the catalytic Proton donor; for decarboxylase activity.

This sequence in the N-terminal section; belongs to the Fmt family. UDP-L-Ara4N formyltransferase subfamily. In the C-terminal section; belongs to the NAD(P)-dependent epimerase/dehydratase family. UDP-glucuronic acid decarboxylase subfamily. In terms of assembly, homohexamer, formed by a dimer of trimers.

It carries out the reaction UDP-alpha-D-glucuronate + NAD(+) = UDP-beta-L-threo-pentopyranos-4-ulose + CO2 + NADH. The catalysed reaction is UDP-4-amino-4-deoxy-beta-L-arabinose + (6R)-10-formyltetrahydrofolate = UDP-4-deoxy-4-formamido-beta-L-arabinose + (6S)-5,6,7,8-tetrahydrofolate + H(+). It participates in nucleotide-sugar biosynthesis; UDP-4-deoxy-4-formamido-beta-L-arabinose biosynthesis; UDP-4-deoxy-4-formamido-beta-L-arabinose from UDP-alpha-D-glucuronate: step 1/3. Its pathway is nucleotide-sugar biosynthesis; UDP-4-deoxy-4-formamido-beta-L-arabinose biosynthesis; UDP-4-deoxy-4-formamido-beta-L-arabinose from UDP-alpha-D-glucuronate: step 3/3. It functions in the pathway bacterial outer membrane biogenesis; lipopolysaccharide biosynthesis. Its function is as follows. Bifunctional enzyme that catalyzes the oxidative decarboxylation of UDP-glucuronic acid (UDP-GlcUA) to UDP-4-keto-arabinose (UDP-Ara4O) and the addition of a formyl group to UDP-4-amino-4-deoxy-L-arabinose (UDP-L-Ara4N) to form UDP-L-4-formamido-arabinose (UDP-L-Ara4FN). The modified arabinose is attached to lipid A and is required for resistance to polymyxin and cationic antimicrobial peptides. This Pseudomonas aeruginosa (strain LESB58) protein is Bifunctional polymyxin resistance protein ArnA.